We begin with the raw amino-acid sequence, 373 residues long: tRNA (guanine(26)-N(2))-dimethyltransferase (373 aa).

Residues Lys2–Ile365 enclose the Trm1 methyltransferase domain. S-adenosyl-L-methionine is bound by residues Arg35, Arg66, Asp86, Asp113, and Ala114.

It belongs to the class I-like SAM-binding methyltransferase superfamily. Trm1 family.

The catalysed reaction is guanosine(26) in tRNA + 2 S-adenosyl-L-methionine = N(2)-dimethylguanosine(26) in tRNA + 2 S-adenosyl-L-homocysteine + 2 H(+). Dimethylates a single guanine residue at position 26 of a number of tRNAs using S-adenosyl-L-methionine as donor of the methyl groups. The polypeptide is tRNA (guanine(26)-N(2))-dimethyltransferase (Methanococcus maripaludis (strain C7 / ATCC BAA-1331)).